A 537-amino-acid chain; its full sequence is 2-succinyl-5-enolpyruvyl-6-hydroxy-3-cyclohexene-1-carboxylate synthase (537 aa).

The protein belongs to the TPP enzyme family. MenD subfamily. Homodimer. The cofactor is Mg(2+). It depends on Mn(2+) as a cofactor. Requires thiamine diphosphate as cofactor.

The enzyme catalyses isochorismate + 2-oxoglutarate + H(+) = 5-enolpyruvoyl-6-hydroxy-2-succinyl-cyclohex-3-ene-1-carboxylate + CO2. It participates in quinol/quinone metabolism; 1,4-dihydroxy-2-naphthoate biosynthesis; 1,4-dihydroxy-2-naphthoate from chorismate: step 2/7. The protein operates within quinol/quinone metabolism; menaquinone biosynthesis. Catalyzes the thiamine diphosphate-dependent decarboxylation of 2-oxoglutarate and the subsequent addition of the resulting succinic semialdehyde-thiamine pyrophosphate anion to isochorismate to yield 2-succinyl-5-enolpyruvyl-6-hydroxy-3-cyclohexene-1-carboxylate (SEPHCHC). The protein is 2-succinyl-5-enolpyruvyl-6-hydroxy-3-cyclohexene-1-carboxylate synthase of Rhodococcus erythropolis (strain PR4 / NBRC 100887).